Consider the following 299-residue polypeptide: MSEFRSGFVCFVGRPNTGKSTLTNALVGTKVAITSNRPQTTRHTIRGIVHRDEFQIILVDTPGLHRPRTLLGQRLNDLVKTTYSEVDVIGLCIPADEAIGPGDRWIHEQIRAVAPRTTLVVIVTKIDKVPRDRVAAQLMAVSELVGPDAEIVPVSATTGEQLDVLTDVLAGKLPPGPAFYPDGELTDEPEETLMAELIREAALEGVRDELPHSLAVVIDEVSPREDRDDLIDVHAILYVERDSQKGIVIGKGGARLREVGTAARLQIEKLLGTKVYLDLRVKIAKNWQRDPKQLGRLGF.

The Era-type G domain occupies 5–175 (RSGFVCFVGR…TDVLAGKLPP (171 aa)). A G1 region spans residues 13–20 (GRPNTGKS). 13–20 (GRPNTGKS) is a binding site for GTP. Residues 39–43 (QTTRH) form a G2 region. The interval 60-63 (DTPG) is G3. Residues 60–64 (DTPGL) and 124–127 (TKID) each bind GTP. The tract at residues 124–127 (TKID) is G4. Positions 154–156 (VSA) are G5. The KH type-2 domain occupies 206-285 (VRDELPHSLA…YLDLRVKIAK (80 aa)).

The protein belongs to the TRAFAC class TrmE-Era-EngA-EngB-Septin-like GTPase superfamily. Era GTPase family. In terms of assembly, monomer.

Its subcellular location is the cell envelope. The protein localises to the secreted. It is found in the cell wall. Exhibits GTPase activity. Binds RNA but is probably not involved in ribosome assembly in mycobacteria. The chain is GTPase Era from Mycobacterium sp. (strain KMS).